The sequence spans 363 residues: Nicotinamide adenine dinucleotide transporter 2, mitochondrial (363 aa).

3 Solcar repeats span residues arginine 15 to valine 107, leucine 115 to tyrosine 203, and leucine 215 to phenylalanine 305. 6 helical membrane passes run alanine 21–isoleucine 41, glycine 82–glycine 102, methionine 121–valine 141, leucine 176–alanine 196, leucine 215–threonine 235, and leucine 277–tyrosine 299. The disordered stretch occupies residues glutamate 313–lysine 363. The span at asparagine 315 to leucine 343 shows a compositional bias: basic and acidic residues. The span at glutamate 345–serine 354 shows a compositional bias: polar residues.

This sequence belongs to the mitochondrial carrier (TC 2.A.29) family. In terms of tissue distribution, highly expressed in young meristematic shoot area, vascular bundles of leaves, developing siliques including the funiculi, petal veins, developing pollen and central cylinder of roots.

It localises to the mitochondrion membrane. Inhibited by pyridoxal 5'-phosphate, bathophenanthroline, tannic acid, mersalyl, mercuric chloride, p-hydroxymercuribenzoate, p-hydroxymercuribenzoate sulfonate, bromocresol purple and N-ethylmaleimide. Functionally, mediates the NAD(+) import into chloroplast. Favors the NAD(+)(in)/ADP or AMP(out) antiport exchange, but is also able to catalyze a low unidirectional transport (uniport) of NAD(+). Transports NAD(+), nicotinic acid adenine dinucleotide, nicotinamide mononucleotide, nicotinic acid mononucleotide, FAD, FMN, TTP, TDP, TMP, UTP, UDP, UMP, CTP, CDP, CMP, GTP, GDP, GMP, 3'-AMP, ATP, ADP and AMP, has low transport activity with cAMP, NADH and alpha-NAD(+), and has no activity with NADP(+), NADPH, nicotinamide, nicotinic acid, adenosine, thiamine mono- or diphosphate, inorganic phosphate, CoA, folate, NaCl, malate, malonate, citrate, fumarate, aspartate, glutamate, S-adenosylmethionine, lysine, arginine, and ornithine. This is Nicotinamide adenine dinucleotide transporter 2, mitochondrial (NDT2) from Arabidopsis thaliana (Mouse-ear cress).